Consider the following 1156-residue polypeptide: Chromosome partition protein Smc (1156 aa).

37–44 is a binding site for ATP; the sequence is PNGAGKSN. Residues 167 to 499 adopt a coiled-coil conformation; it reads SGIGEYERKK…AIEREVRSFS (333 aa). Positions 509–624 constitute an SMC hinge domain; it reads KGVYGSVSEL…VENFESAKAI (116 aa). The stretch at 654 to 1001 forms a coiled coil; the sequence is GELNKRYYEE…EETENKKRKV (348 aa).

This sequence belongs to the SMC family. As to quaternary structure, homodimer.

It localises to the cytoplasm. Required for chromosome condensation and partitioning. The protein is Chromosome partition protein Smc of Aquifex aeolicus (strain VF5).